We begin with the raw amino-acid sequence, 423 residues long: Serine--tRNA ligase (423 aa).

Residue 230-232 (TAE) coordinates L-serine. 261–263 (RSE) serves as a coordination point for ATP. Glu284 lines the L-serine pocket. 348-351 (EISS) is a binding site for ATP. Ser384 is an L-serine binding site.

The protein belongs to the class-II aminoacyl-tRNA synthetase family. Type-1 seryl-tRNA synthetase subfamily. As to quaternary structure, homodimer. The tRNA molecule binds across the dimer.

Its subcellular location is the cytoplasm. It carries out the reaction tRNA(Ser) + L-serine + ATP = L-seryl-tRNA(Ser) + AMP + diphosphate + H(+). The catalysed reaction is tRNA(Sec) + L-serine + ATP = L-seryl-tRNA(Sec) + AMP + diphosphate + H(+). The protein operates within aminoacyl-tRNA biosynthesis; selenocysteinyl-tRNA(Sec) biosynthesis; L-seryl-tRNA(Sec) from L-serine and tRNA(Sec): step 1/1. Its function is as follows. Catalyzes the attachment of serine to tRNA(Ser). Is also able to aminoacylate tRNA(Sec) with serine, to form the misacylated tRNA L-seryl-tRNA(Sec), which will be further converted into selenocysteinyl-tRNA(Sec). The polypeptide is Serine--tRNA ligase (Syntrophobacter fumaroxidans (strain DSM 10017 / MPOB)).